We begin with the raw amino-acid sequence, 114 residues long: Large ribosomal subunit protein uL22 (114 aa).

The protein belongs to the universal ribosomal protein uL22 family. Part of the 50S ribosomal subunit.

This protein binds specifically to 23S rRNA; its binding is stimulated by other ribosomal proteins, e.g. L4, L17, and L20. It is important during the early stages of 50S assembly. It makes multiple contacts with different domains of the 23S rRNA in the assembled 50S subunit and ribosome. Functionally, the globular domain of the protein is located near the polypeptide exit tunnel on the outside of the subunit, while an extended beta-hairpin is found that lines the wall of the exit tunnel in the center of the 70S ribosome. The protein is Large ribosomal subunit protein uL22 of Streptococcus pyogenes serotype M5 (strain Manfredo).